The primary structure comprises 766 residues: Protein transport protein Sec23B (766 aa).

Ala2 carries the N-acetylalanine modification. Residues Cys61, Cys66, Cys85, and Cys88 each coordinate Zn(2+). Lys564 carries the post-translational modification N6-acetyllysine. A Gelsolin-like repeat occupies 633 to 719 (PEPVLLDSSS…EHGGSQARFL (87 aa)).

This sequence belongs to the SEC23/SEC24 family. SEC23 subfamily. COPII is composed of at least five proteins: the Sec23/24 complex, the Sec13/31 complex and Sar1. Interacts with SAR1A.

The protein resides in the cytoplasmic vesicle. It localises to the COPII-coated vesicle membrane. The protein localises to the endoplasmic reticulum membrane. It is found in the cytoplasm. Its subcellular location is the cytosol. Component of the coat protein complex II (COPII) which promotes the formation of transport vesicles from the endoplasmic reticulum (ER). The coat has two main functions, the physical deformation of the endoplasmic reticulum membrane into vesicles and the selection of cargo molecules for their transport to the Golgi complex. The chain is Protein transport protein Sec23B from Pongo abelii (Sumatran orangutan).